We begin with the raw amino-acid sequence, 355 residues long: tRNA-specific 2-thiouridylase MnmA (355 aa).

Residues 8 to 15 (GMSGGVDS) and Met34 each bind ATP. Catalysis depends on Cys103, which acts as the Nucleophile. Residues Cys103 and Cys199 are joined by a disulfide bond. Gly127 serves as a coordination point for ATP. The interaction with tRNA stretch occupies residues 149-151 (KDQ). The active-site Cysteine persulfide intermediate is Cys199. The interval 305–306 (RY) is interaction with tRNA.

This sequence belongs to the MnmA/TRMU family.

The protein resides in the cytoplasm. The catalysed reaction is S-sulfanyl-L-cysteinyl-[protein] + uridine(34) in tRNA + AH2 + ATP = 2-thiouridine(34) in tRNA + L-cysteinyl-[protein] + A + AMP + diphosphate + H(+). Catalyzes the 2-thiolation of uridine at the wobble position (U34) of tRNA, leading to the formation of s(2)U34. The protein is tRNA-specific 2-thiouridylase MnmA of Clostridium acetobutylicum (strain ATCC 824 / DSM 792 / JCM 1419 / IAM 19013 / LMG 5710 / NBRC 13948 / NRRL B-527 / VKM B-1787 / 2291 / W).